The sequence spans 319 residues: Protein-methionine methyltransferase laeA (319 aa).

Positions 269–293 (REPQSGTCSVQRENGANGDRSTLSA) are disordered. The span at 270–293 (EPQSGTCSVQRENGANGDRSTLSA) shows a compositional bias: polar residues.

This sequence belongs to the methyltransferase superfamily. LaeA methyltransferase family. Component of the heterotrimeric velvet complex composed of laeA, veA and velB; VeA acting as a bridging protein between laeA and velB.

It is found in the nucleus. It carries out the reaction L-methionyl-[protein] + S-adenosyl-L-methionine = S-methyl-L-methionyl-[protein] + S-adenosyl-L-homocysteine. Functionally, methyltransferase; component of the velvet transcription factor complex that acts as a global regulator for secondary metabolite gene expression. Controls the expression of the chaetoglobosin A biosynthesis cluster via the cheR transcription factor and the subsequent production of chaetoglobosin A. Positively regulates the expression of smtA and negatively regulates the expression of velB. LaeA also regulates pigmentation and spores production. This chain is Protein-methionine methyltransferase laeA, found in Chaetomium globosum (strain ATCC 6205 / CBS 148.51 / DSM 1962 / NBRC 6347 / NRRL 1970) (Soil fungus).